The chain runs to 628 residues: Eukaryotic peptide chain release factor GTP-binding subunit ERF3B (628 aa).

Residues 1-10 are compositionally biased toward low complexity; that stretch reads MDSGSSSSDS. 3 disordered regions span residues 1-49, 72-124, and 146-195; these read MDSG…SAFS, FLRG…LEGS, and LEES…VIVP. Residues 201–425 enclose the tr-type G domain; that stretch reads KEHVNVVFIG…YLDNLPNFNR (225 aa). The tract at residues 210–217 is G1; it reads GHVDAGKS. 213–218 is a binding site for GTP; that stretch reads DAGKST. The interval 266-270 is G2; that stretch reads GKTVE. Positions 287-290 are G3; the sequence is DAPG. Residues 349–352 and 391–393 contribute to the GTP site; these read NKMD and SGL. The G4 stretch occupies residues 349–352; sequence NKMD. A G5 region spans residues 391–393; sequence SGL.

Belongs to the TRAFAC class translation factor GTPase superfamily. Classic translation factor GTPase family. ERF3 subfamily. In terms of assembly, component of the eRF1-eRF3-GTP ternary complex, composed of ETF1/ERF1 and ERF3 (GSPT1/ERF3A or GSPT2/ERF3B) and GTP. Component of the transient SURF (SMG1-UPF1-eRF1-eRF3) complex. Interacts with UPF1 and PABPC1. In terms of tissue distribution, highly expressed in IUCC stage II colorectal cancer (CRC).

The protein localises to the cytoplasm. It carries out the reaction GTP + H2O = GDP + phosphate + H(+). GTPase component of the eRF1-eRF3-GTP ternary complex, a ternary complex that mediates translation termination in response to the termination codons UAA, UAG and UGA. GSPT2/ERF3B mediates ETF1/ERF1 delivery to stop codons: The eRF1-eRF3-GTP complex binds to a stop codon in the ribosomal A-site. GTP hydrolysis by GSPT2/ERF3B induces a conformational change that leads to its dissociation, permitting ETF1/ERF1 to accommodate fully in the A-site. Component of the transient SURF complex which recruits UPF1 to stalled ribosomes in the context of nonsense-mediated decay (NMD) of mRNAs containing premature stop codons. This Homo sapiens (Human) protein is Eukaryotic peptide chain release factor GTP-binding subunit ERF3B (GSPT2).